The primary structure comprises 186 residues: Ribosome-recycling factor (186 aa).

Belongs to the RRF family.

It is found in the cytoplasm. Its function is as follows. Responsible for the release of ribosomes from messenger RNA at the termination of protein biosynthesis. May increase the efficiency of translation by recycling ribosomes from one round of translation to another. The polypeptide is Ribosome-recycling factor (Chelativorans sp. (strain BNC1)).